Consider the following 388-residue polypeptide: MSVALAGSPAINATQYEPLRVMVVDDSVVIRGLISRWIEAEPDMVVAASLRTGLDAVNQVERIKPDIALLDIEMPELDGIAALPQLLAKKRDLIVIMASTLTRRNAEISFKALSLGAADYIPKPETTRESAGAEVFRHDLLQKIRHLGGKVRRRVSAPSASAPMVARVREAAAAPAAPSVASQAALVKRAFGPTAPRVLLIGSSTGGPQALMSLVAEIGPVIDRYPVLITQHMPPTFTTILAEHLMRAARRPAHEGVDGELIKPGRIYLAPGGRHMRVTRQGGQPAIALDDGPAVNFCKPAVDPLFTSAIDVWQGGIMAVVLTGMGSDGMRGGKDIVAAGGSVIAQDEASSVVWGMPGAAANAGICAAVLPLNQIGPKLVRLFSGDRS.

One can recognise a Response regulatory domain in the interval arginine 20–histidine 138. Aspartate 71 carries the post-translational modification 4-aspartylphosphate. Positions proline 193–aspartate 386 constitute a CheB-type methylesterase domain. Residues serine 204, histidine 232, and aspartate 328 contribute to the active site.

It belongs to the CheB family. Post-translationally, phosphorylated by CheA. Phosphorylation of the N-terminal regulatory domain activates the methylesterase activity.

The protein resides in the cytoplasm. The catalysed reaction is [protein]-L-glutamate 5-O-methyl ester + H2O = L-glutamyl-[protein] + methanol + H(+). It catalyses the reaction L-glutaminyl-[protein] + H2O = L-glutamyl-[protein] + NH4(+). Involved in chemotaxis. Part of a chemotaxis signal transduction system that modulates chemotaxis in response to various stimuli. Catalyzes the demethylation of specific methylglutamate residues introduced into the chemoreceptors (methyl-accepting chemotaxis proteins or MCP) by CheR. Also mediates the irreversible deamidation of specific glutamine residues to glutamic acid. In Rhodopseudomonas palustris (strain HaA2), this protein is Protein-glutamate methylesterase/protein-glutamine glutaminase.